The primary structure comprises 579 residues: Acetolactate synthase (579 aa).

Position 61 (Glu61) interacts with thiamine diphosphate. FAD is bound by residues Arg163, 274–295, and 317–336; these read HGTA…VGVR and DIDP…IVGD. Residues 408–487 form a thiamine pyrophosphate binding region; sequence QHQMWAGQFV…VKVIILNNGW (80 aa). Positions 458 and 485 each coordinate Mg(2+).

Belongs to the TPP enzyme family. Mg(2+) serves as cofactor. Thiamine diphosphate is required as a cofactor.

The enzyme catalyses 2 pyruvate + H(+) = (2S)-2-acetolactate + CO2. The protein operates within amino-acid biosynthesis; L-isoleucine biosynthesis; L-isoleucine from 2-oxobutanoate: step 1/4. It functions in the pathway amino-acid biosynthesis; L-valine biosynthesis; L-valine from pyruvate: step 1/4. This chain is Acetolactate synthase (ilvY), found in Arthrospira platensis (Spirulina platensis).